Consider the following 317-residue polypeptide: Secreted mono- and diacylglycerol lipase 3 (317 aa).

Positions M1–A29 are cleaved as a signal peptide. Residues C61 and C310 are joined by a disulfide bond. Residue N108 is glycosylated (N-linked (GlcNAc...) asparagine). The active-site Nucleophile is the S175. N-linked (GlcNAc...) asparagine glycosylation occurs at N194. D234 is an active-site residue. N-linked (GlcNAc...) asparagine glycosylation is present at N258. H294 is an active-site residue.

This sequence belongs to the AB hydrolase superfamily. Lipase family. Class 3 subfamily.

It is found in the secreted. The enzyme catalyses a monoacylglycerol + H2O = glycerol + a fatty acid + H(+). The catalysed reaction is a diacylglycerol + H2O = a monoacylglycerol + a fatty acid + H(+). Secreted mono- and diacylglycerol lipase involved in plant virulence. Has a substrate preference for p-nitrophenyl esters with a carbon chain length of C10 (p-nitrophenyl caprate). This chain is Secreted mono- and diacylglycerol lipase 3, found in Gibberella zeae (strain ATCC MYA-4620 / CBS 123657 / FGSC 9075 / NRRL 31084 / PH-1) (Wheat head blight fungus).